Consider the following 293-residue polypeptide: Epidermal growth factor-like protein 8 (293 aa).

The first 25 residues, 1 to 25 (MGSRAELCTLLGGFSFLLLLIPGEG), serve as a signal peptide directing secretion. Residues 34-112 (SQGVCSKQTL…RHPGALTCEA (79 aa)) enclose the EMI domain. 9 cysteine pairs are disulfide-bonded: C38-C97, C65-C71, C96-C110, C114-C124, C118-C130, C132-C141, C148-C159, C155-C168, and C170-C183. N50 carries an N-linked (GlcNAc...) asparagine glycan. An EGF-like 1 domain is found at 111-142 (EAICAKPCLNGGVCVRPDQCECAPGWGGKHCH). Residues 144 to 184 (DVDECRTSITLCSHHCFNTAGSFTCGCPHDLVLGVDGRTCM) enclose the EGF-like 2; calcium-binding domain. Residues 195 to 232 (SILSVAVREAEKDERALKQEIHELRGRLERLEQWAGQA) are a coiled coil.

The protein resides in the secreted. This chain is Epidermal growth factor-like protein 8 (EGFL8), found in Homo sapiens (Human).